The following is a 528-amino-acid chain: GMP synthase [glutamine-hydrolyzing] (528 aa).

A Glutamine amidotransferase type-1 domain is found at 3-199; that stretch reads KVAIIDFGSQ…FLDIAGCQKD (197 aa). Residue Cys83 is the Nucleophile of the active site. Catalysis depends on residues His174 and Glu176. The 195-residue stretch at 200–394 folds into the GMPS ATP-PPase domain; that stretch reads WTVTSFIDDQ…LGISTEILMR (195 aa). Residue 227-233 coordinates ATP; that stretch reads SGGVDSS.

Homodimer.

It carries out the reaction XMP + L-glutamine + ATP + H2O = GMP + L-glutamate + AMP + diphosphate + 2 H(+). It participates in purine metabolism; GMP biosynthesis; GMP from XMP (L-Gln route): step 1/1. Catalyzes the synthesis of GMP from XMP. This chain is GMP synthase [glutamine-hydrolyzing], found in Ehrlichia ruminantium (strain Welgevonden).